Reading from the N-terminus, the 859-residue chain is Leucine--tRNA ligase (859 aa).

A 'HIGH' region motif is present at residues proline 42 to histidine 52. Positions lysine 618 to serine 622 match the 'KMSKS' region motif. Residue lysine 621 coordinates ATP.

It belongs to the class-I aminoacyl-tRNA synthetase family.

It is found in the cytoplasm. The catalysed reaction is tRNA(Leu) + L-leucine + ATP = L-leucyl-tRNA(Leu) + AMP + diphosphate. The polypeptide is Leucine--tRNA ligase (Shewanella woodyi (strain ATCC 51908 / MS32)).